Reading from the N-terminus, the 148-residue chain is Ribonuclease H (148 aa).

The RNase H type-1 domain occupies 1 to 142 (MSDSVEIYTD…ADQLANRGVD (142 aa)). Asp-10, Glu-48, Asp-70, and Asp-134 together coordinate Mg(2+). The segment at 129-148 (GNERADQLANRGVDEVRAQR) is disordered.

This sequence belongs to the RNase H family. Monomer. The cofactor is Mg(2+).

The protein resides in the cytoplasm. The enzyme catalyses Endonucleolytic cleavage to 5'-phosphomonoester.. Its function is as follows. Endonuclease that specifically degrades the RNA of RNA-DNA hybrids. The polypeptide is Ribonuclease H (Pseudomonas entomophila (strain L48)).